The sequence spans 189 residues: Thermostable direct hemolysin-related (189 aa).

An N-terminal signal peptide occupies residues 1-24; that stretch reads MKYRYFAKKSFLFISMLAAFKTFA. Cys175 and Cys185 form a disulfide bridge.

The protein belongs to the TDH hemolysin family. In terms of assembly, homodimer.

Bacterial hemolysins are exotoxins that attack blood cell membranes and cause cell rupture by mechanisms not clearly defined. This Vibrio parahaemolyticus protein is Thermostable direct hemolysin-related (tdh3).